Here is a 248-residue protein sequence, read N- to C-terminus: MFGKVEEKLNNVLKTEGALYFILIDPDEKNCLEIAEKVKDYADAIILGGSIGITNLDETTKQIKEIIGDIPIILFPGNVDGLTPYADAVFFMSFMNSNNTYWTTTAPTLGAITVKKYNLEPISMAYLGIEPIKRTAVGFVGEVNEIPQRKPEIAGMYCLSAKYFGMRWAYLEAGSGAELPVSNEIIGISKKLSGINIIVGGGIRTPETAYQKVLSGADAIVTGTLIEDNPDAVKEMRNAIKKAGIDKL.

The Mg(2+) site is built by Asp25 and Ser50. Sn-glycerol 1-phosphate is bound by residues 170 to 176 (YLEAGSG), 201 to 202 (GG), and 223 to 224 (GT).

Belongs to the GGGP/HepGP synthase family. Group II subfamily. Mg(2+) serves as cofactor.

The protein resides in the cytoplasm. The catalysed reaction is sn-glycerol 1-phosphate + (2E,6E,10E)-geranylgeranyl diphosphate = sn-3-O-(geranylgeranyl)glycerol 1-phosphate + diphosphate. Its pathway is membrane lipid metabolism; glycerophospholipid metabolism. Its function is as follows. Prenyltransferase that catalyzes the transfer of the geranylgeranyl moiety of geranylgeranyl diphosphate (GGPP) to the C3 hydroxyl of sn-glycerol-1-phosphate (G1P). This reaction is the first ether-bond-formation step in the biosynthesis of archaeal membrane lipids. This chain is Geranylgeranylglyceryl phosphate synthase, found in Methanococcus aeolicus (strain ATCC BAA-1280 / DSM 17508 / OCM 812 / Nankai-3).